The sequence spans 199 residues: Thymidine kinase (199 aa).

ATP-binding positions include 23–30 (GSMFSGKT) and 95–98 (DEAQ). Glutamate 96 acts as the Proton acceptor in catalysis. 4 residues coordinate Zn(2+): cysteine 152, cysteine 155, cysteine 184, and cysteine 187.

It belongs to the thymidine kinase family. As to quaternary structure, homotetramer.

Its subcellular location is the cytoplasm. It catalyses the reaction thymidine + ATP = dTMP + ADP + H(+). This chain is Thymidine kinase, found in Bacteroides fragilis (strain ATCC 25285 / DSM 2151 / CCUG 4856 / JCM 11019 / LMG 10263 / NCTC 9343 / Onslow / VPI 2553 / EN-2).